A 216-amino-acid polypeptide reads, in one-letter code: Putative flagellar filament outer layer-like protein (216 aa).

The tract at residues 1 to 22 is disordered; sequence MFAQDAAQTGEQTTQNQGENGN. Residues 8 to 22 are compositionally biased toward low complexity; the sequence is QTGEQTTQNQGENGN.

It localises to the periplasmic flagellum. Its subcellular location is the periplasm. In terms of biological role, might be part of the flagella. In Brachyspira hyodysenteriae (strain ATCC 49526 / WA1), this protein is Putative flagellar filament outer layer-like protein (flaAL).